We begin with the raw amino-acid sequence, 319 residues long: Aspartate carbamoyltransferase catalytic subunit (319 aa).

Positions 64 and 65 each coordinate carbamoyl phosphate. Lysine 92 serves as a coordination point for L-aspartate. Arginine 114, histidine 142, and glutamine 145 together coordinate carbamoyl phosphate. L-aspartate contacts are provided by arginine 175 and arginine 229. Carbamoyl phosphate-binding residues include glycine 270 and proline 271.

The protein belongs to the aspartate/ornithine carbamoyltransferase superfamily. ATCase family. Heterododecamer (2C3:3R2) of six catalytic PyrB chains organized as two trimers (C3), and six regulatory PyrI chains organized as three dimers (R2).

The enzyme catalyses carbamoyl phosphate + L-aspartate = N-carbamoyl-L-aspartate + phosphate + H(+). It functions in the pathway pyrimidine metabolism; UMP biosynthesis via de novo pathway; (S)-dihydroorotate from bicarbonate: step 2/3. In terms of biological role, catalyzes the condensation of carbamoyl phosphate and aspartate to form carbamoyl aspartate and inorganic phosphate, the committed step in the de novo pyrimidine nucleotide biosynthesis pathway. This Rhodospirillum rubrum (strain ATCC 11170 / ATH 1.1.1 / DSM 467 / LMG 4362 / NCIMB 8255 / S1) protein is Aspartate carbamoyltransferase catalytic subunit.